The primary structure comprises 909 residues: UPF0182 protein H16_A1615 (909 aa).

7 helical membrane passes run 16 to 36 (TWVV…GLVV), 58 to 78 (ALLF…SGWL), 114 to 134 (VAVL…AIAL), 169 to 189 (WLLL…GLRG), 205 to 225 (ATHG…SYWL), 246 to 266 (VHVG…AAAA), and 281 to 301 (AAAL…PALF).

Belongs to the UPF0182 family.

It is found in the cell membrane. This is UPF0182 protein H16_A1615 from Cupriavidus necator (strain ATCC 17699 / DSM 428 / KCTC 22496 / NCIMB 10442 / H16 / Stanier 337) (Ralstonia eutropha).